A 346-amino-acid chain; its full sequence is Biotin synthase (346 aa).

Residues 38 to 256 (QQVQVSTLLS…IAVARIMMPT (219 aa)) form the Radical SAM core domain. [4Fe-4S] cluster contacts are provided by Cys-53, Cys-57, and Cys-60. [2Fe-2S] cluster-binding residues include Cys-97, Cys-128, Cys-188, and Arg-260.

The protein belongs to the radical SAM superfamily. Biotin synthase family. Homodimer. [4Fe-4S] cluster is required as a cofactor. [2Fe-2S] cluster serves as cofactor.

The catalysed reaction is (4R,5S)-dethiobiotin + (sulfur carrier)-SH + 2 reduced [2Fe-2S]-[ferredoxin] + 2 S-adenosyl-L-methionine = (sulfur carrier)-H + biotin + 2 5'-deoxyadenosine + 2 L-methionine + 2 oxidized [2Fe-2S]-[ferredoxin]. Its pathway is cofactor biosynthesis; biotin biosynthesis; biotin from 7,8-diaminononanoate: step 2/2. In terms of biological role, catalyzes the conversion of dethiobiotin (DTB) to biotin by the insertion of a sulfur atom into dethiobiotin via a radical-based mechanism. The protein is Biotin synthase of Citrobacter koseri (strain ATCC BAA-895 / CDC 4225-83 / SGSC4696).